The sequence spans 210 residues: Large ribosomal subunit protein uL4 (210 aa).

The interval 46 to 96 (QGNASTKTRAEVRGGGRKPWRQKGTGRARAGSNRSPLWRGGGVIFGPKPRD) is disordered. Basic residues predominate over residues 60–71 (GGRKPWRQKGTG).

Belongs to the universal ribosomal protein uL4 family. Part of the 50S ribosomal subunit.

Functionally, one of the primary rRNA binding proteins, this protein initially binds near the 5'-end of the 23S rRNA. It is important during the early stages of 50S assembly. It makes multiple contacts with different domains of the 23S rRNA in the assembled 50S subunit and ribosome. Its function is as follows. Forms part of the polypeptide exit tunnel. This is Large ribosomal subunit protein uL4 from Gloeothece citriformis (strain PCC 7424) (Cyanothece sp. (strain PCC 7424)).